Consider the following 463-residue polypeptide: Probable ECA polymerase (463 aa).

Transmembrane regions (helical) follow at residues 6 to 26 (FGGL…LTWM), 39 to 59 (FSLL…VLVF), 65 to 85 (VVPV…YAIY), 112 to 132 (ANLT…IFFL), 154 to 174 (GVAL…VYFL), 180 to 200 (AWLM…VIVG), 201 to 221 (GTRA…IVRG), 222 to 242 (WITL…MFWL), 340 to 360 (LVVM…GLVI), 377 to 397 (YKAA…IVLT), and 408 to 428 (VVFF…LYWL).

The protein belongs to the WzyE family. As to quaternary structure, probably part of a complex composed of WzxE, WzyE and WzzE.

The protein resides in the cell inner membrane. It participates in bacterial outer membrane biogenesis; enterobacterial common antigen biosynthesis. In terms of biological role, probably involved in the polymerization of enterobacterial common antigen (ECA) trisaccharide repeat units. This Pectobacterium carotovorum subsp. carotovorum (strain PC1) protein is Probable ECA polymerase.